The following is a 497-amino-acid chain: Transcription termination/antitermination protein NusA (497 aa).

The 66-residue stretch at 135–200 (GKILTGIVKK…RGAQLFVTRS (66 aa)) folds into the S1 motif domain. Residues 302–372 (RHTIDIAVDS…LKIDQKISNI (71 aa)) form the KH domain. 2 tandem repeats follow at residues 364–414 (KIDQ…KKAL) and 439–489 (GMNQ…RNIC). A 2 X 51 AA approximate repeats region spans residues 364-489 (KIDQKISNIL…MLIMAARNIC (126 aa)).

The protein belongs to the NusA family. As to quaternary structure, monomer. Binds directly to the core enzyme of the DNA-dependent RNA polymerase and to nascent RNA.

Its subcellular location is the cytoplasm. Participates in both transcription termination and antitermination. In Buchnera aphidicola subsp. Baizongia pistaciae (strain Bp), this protein is Transcription termination/antitermination protein NusA.